The chain runs to 317 residues: Beta-ketoacyl-[acyl-carrier-protein] synthase III (317 aa).

Catalysis depends on residues Cys112 and His244. The tract at residues 245-249 (QANLR) is ACP-binding. Residue Asn274 is part of the active site.

Belongs to the thiolase-like superfamily. FabH family. As to quaternary structure, homodimer.

It localises to the cytoplasm. It carries out the reaction malonyl-[ACP] + acetyl-CoA + H(+) = 3-oxobutanoyl-[ACP] + CO2 + CoA. It participates in lipid metabolism; fatty acid biosynthesis. Functionally, catalyzes the condensation reaction of fatty acid synthesis by the addition to an acyl acceptor of two carbons from malonyl-ACP. Catalyzes the first condensation reaction which initiates fatty acid synthesis and may therefore play a role in governing the total rate of fatty acid production. Possesses both acetoacetyl-ACP synthase and acetyl transacylase activities. Its substrate specificity determines the biosynthesis of branched-chain and/or straight-chain of fatty acids. The chain is Beta-ketoacyl-[acyl-carrier-protein] synthase III from Pasteurella multocida (strain Pm70).